We begin with the raw amino-acid sequence, 258 residues long: Chymotrypsin-2 (258 aa).

Positions 1-17 are cleaved as a signal peptide; sequence MLRKVFAVVSVLLVVSA. The propeptide at 18–32 is activation peptide; the sequence is AKVTKLVLDDHYVNR. Positions 33 to 255 constitute a Peptidase S1 domain; sequence VVGGEVAKNG…YHEWVRTTMA (223 aa). Cysteines 59 and 75 form a disulfide. Residues His-74 and Asp-119 each act as charge relay system in the active site. 2 disulfides stabilise this stretch: Cys-182–Cys-198 and Cys-208–Cys-232. Residue Ser-212 is the Charge relay system of the active site.

It belongs to the peptidase S1 family. In terms of tissue distribution, after blood feeding, expression is induced in the midgut epithelium, followed by secretion into the midgut lumen.

The protein resides in the secreted. The enzyme catalyses Preferential cleavage: Tyr-|-Xaa, Trp-|-Xaa, Phe-|-Xaa, Leu-|-Xaa.. In Anopheles gambiae (African malaria mosquito), this protein is Chymotrypsin-2 (CHYM2).